A 435-amino-acid chain; its full sequence is Chaperone SurA (435 aa).

A signal peptide spans 1 to 29 (MINKTLHTKHTLLGLLAMAVLMIPVWSQA). 2 PpiC domains span residues 180–281 (QEDF…KMID) and 290–390 (VTQY…RVDD).

It localises to the periplasm. It carries out the reaction [protein]-peptidylproline (omega=180) = [protein]-peptidylproline (omega=0). Chaperone involved in the correct folding and assembly of outer membrane proteins. Recognizes specific patterns of aromatic residues and the orientation of their side chains, which are found more frequently in integral outer membrane proteins. May act in both early periplasmic and late outer membrane-associated steps of protein maturation. This Alcanivorax borkumensis (strain ATCC 700651 / DSM 11573 / NCIMB 13689 / SK2) protein is Chaperone SurA.